Reading from the N-terminus, the 187-residue chain is Elongation factor P (187 aa).

It belongs to the elongation factor P family.

The protein localises to the cytoplasm. Its pathway is protein biosynthesis; polypeptide chain elongation. Its function is as follows. Involved in peptide bond synthesis. Stimulates efficient translation and peptide-bond synthesis on native or reconstituted 70S ribosomes in vitro. Probably functions indirectly by altering the affinity of the ribosome for aminoacyl-tRNA, thus increasing their reactivity as acceptors for peptidyl transferase. The protein is Elongation factor P of Bifidobacterium animalis subsp. lactis (strain AD011).